The sequence spans 510 residues: Hepatic triacylglycerol lipase (510 aa).

Residues methionine 1–alanine 21 form the signal peptide. Residue asparagine 79 is glycosylated (N-linked (GlcNAc...) asparagine). Serine 169 acts as the Nucleophile in catalysis. Catalysis depends on aspartate 195, which acts as the Charge relay system. An essential for determining substrate specificity region spans residues cysteine 255–cysteine 278. Histidine 280 serves as the catalytic Charge relay system. The 135-residue stretch at tyrosine 353–asparagine 487 folds into the PLAT domain. Asparagine 398 carries N-linked (GlcNAc...) asparagine glycosylation.

It belongs to the AB hydrolase superfamily. Lipase family. In terms of assembly, homodimer.

The protein localises to the secreted. The catalysed reaction is a triacylglycerol + H2O = a diacylglycerol + a fatty acid + H(+). It carries out the reaction a 1-acyl-sn-glycero-3-phosphocholine + H2O = sn-glycerol 3-phosphocholine + a fatty acid + H(+). The enzyme catalyses a 1,2-diacyl-sn-glycero-3-phosphocholine + H2O = a 2-acyl-sn-glycero-3-phosphocholine + a fatty acid + H(+). It catalyses the reaction 1,2,3-tri-(9Z-octadecenoyl)-glycerol + H2O = di-(9Z)-octadecenoylglycerol + (9Z)-octadecenoate + H(+). The catalysed reaction is 1,2-di-(9Z-octadecenoyl)-sn-glycero-3-phosphocholine + H2O = (9Z-octadecenoyl)-sn-glycero-3-phosphocholine + (9Z)-octadecenoate + H(+). It carries out the reaction 1,2,3-tributanoylglycerol + H2O = dibutanoylglycerol + butanoate + H(+). The enzyme catalyses 1,2-dihexadecanoyl-sn-glycero-3-phosphocholine + H2O = hexadecanoyl-sn-glycero-3-phosphocholine + hexadecanoate + H(+). It catalyses the reaction 1,2-di-(9Z-octadecenoyl)-sn-glycerol + H2O = 2-(9Z-octadecenoyl)-glycerol + (9Z)-octadecenoate + H(+). The catalysed reaction is 1,2,3-tri-(9Z-octadecenoyl)-glycerol + H2O = 2,3-di-(9Z)-octadecenoyl-sn-glycerol + (9Z)-octadecenoate + H(+). It carries out the reaction 1-(9Z-octadecenoyl)-sn-glycero-3-phospho-L-serine + H2O = sn-glycero-3-phospho-L-serine + (9Z)-octadecenoate + H(+). The enzyme catalyses 1-hexadecanoyl-sn-glycero-3-phosphocholine + H2O = sn-glycerol 3-phosphocholine + hexadecanoate + H(+). It catalyses the reaction 1,3-di-(9Z-octadecenoyl)-glycerol + H2O = 3-(9Z-octadecenoyl)-sn-glycerol + (9Z)-octadecenoate + H(+). Its function is as follows. Catalyzes the hydrolysis of triglycerides and phospholipids present in circulating plasma lipoproteins, including chylomicrons, intermediate density lipoproteins (IDL), low density lipoproteins (LDL) of large size and high density lipoproteins (HDL), releasing free fatty acids (FFA) and smaller lipoprotein particles. Also exhibits lysophospholipase activity. Can hydrolyze both neutral lipid and phospholipid substrates but shows a greater binding affinity for neutral lipid substrates than phospholipid substrates. In native LDL, preferentially hydrolyzes the phosphatidylcholine species containing polyunsaturated fatty acids at sn-2 position. This Mus musculus (Mouse) protein is Hepatic triacylglycerol lipase (Lipc).